A 406-amino-acid chain; its full sequence is Putative phosphate permease TK2061 (406 aa).

The next 10 helical transmembrane spans lie at 2–22, 45–65, 82–102, 115–135, 139–159, 182–202, 208–228, 288–308, 324–346, and 385–405; these read AVMDPWLLITIIVGFGMAWAI, AVLIAGVLEFTGAYFFGKSVT, TVLIYGSVAALLAATIWLVIA, IIGGIVGYGIVYAGFSIVNWG, QVVLSWILSPIIGAIMAFLVF, FWIGLAFVVIGTMFYIKVLHG, GVLFYGIPAGLVVFLILFLTL, VPVPRWILAMGGLGIAIGVAT, LTNTRGFTIDFSAATVVLVASWL, and FVTVPVAALISAFLFKILMIV.

Belongs to the inorganic phosphate transporter (PiT) (TC 2.A.20) family.

Its subcellular location is the cell membrane. Functionally, potential transporter for phosphate. This Thermococcus kodakarensis (strain ATCC BAA-918 / JCM 12380 / KOD1) (Pyrococcus kodakaraensis (strain KOD1)) protein is Putative phosphate permease TK2061.